Here is a 100-residue protein sequence, read N- to C-terminus: Small ribosomal subunit protein uS14 (100 aa).

It belongs to the universal ribosomal protein uS14 family. In terms of assembly, part of the 30S ribosomal subunit. Contacts proteins S3 and S10.

In terms of biological role, binds 16S rRNA, required for the assembly of 30S particles and may also be responsible for determining the conformation of the 16S rRNA at the A site. The sequence is that of Small ribosomal subunit protein uS14 from Prochlorococcus marinus (strain AS9601).